We begin with the raw amino-acid sequence, 182 residues long: ATP-dependent protease subunit HslV (182 aa).

Threonine 10 is a catalytic residue. Alanine 166, cysteine 169, and serine 172 together coordinate Na(+).

This sequence belongs to the peptidase T1B family. HslV subfamily. In terms of assembly, a double ring-shaped homohexamer of HslV is capped on each side by a ring-shaped HslU homohexamer. The assembly of the HslU/HslV complex is dependent on binding of ATP.

It localises to the cytoplasm. It carries out the reaction ATP-dependent cleavage of peptide bonds with broad specificity.. With respect to regulation, allosterically activated by HslU binding. In terms of biological role, protease subunit of a proteasome-like degradation complex believed to be a general protein degrading machinery. This is ATP-dependent protease subunit HslV from Rickettsia peacockii (strain Rustic).